The primary structure comprises 297 residues: N-acetylneuraminate lyase (297 aa).

Aceneuramate-binding residues include Ser47 and Thr48. The active-site Proton donor is Tyr137. Lys165 functions as the Schiff-base intermediate with substrate in the catalytic mechanism. Residues Thr167, Gly189, Asp191, Glu192, and Ser208 each coordinate aceneuramate.

This sequence belongs to the DapA family. NanA subfamily. As to quaternary structure, homotetramer.

The protein localises to the cytoplasm. It catalyses the reaction aceneuramate = aldehydo-N-acetyl-D-mannosamine + pyruvate. Its pathway is amino-sugar metabolism; N-acetylneuraminate degradation; D-fructose 6-phosphate from N-acetylneuraminate: step 1/5. Catalyzes the reversible aldol cleavage of N-acetylneuraminic acid (sialic acid; Neu5Ac) to form pyruvate and N-acetylmannosamine (ManNAc) via a Schiff base intermediate. The chain is N-acetylneuraminate lyase from Enterobacter sp. (strain 638).